We begin with the raw amino-acid sequence, 294 residues long: Small ribosomal subunit protein uS2 (294 aa).

Residues 256–274 (SGKFIMDEDPDSKKTKTAE) show a composition bias toward basic and acidic residues. The interval 256–294 (SGKFIMDEDPDSKKTKTAEEPSATIEPSTTTTVEVDQNE) is disordered. A compositionally biased stretch (polar residues) spans 280-294 (IEPSTTTTVEVDQNE).

Belongs to the universal ribosomal protein uS2 family.

This chain is Small ribosomal subunit protein uS2, found in Leptospira interrogans serogroup Icterohaemorrhagiae serovar Lai (strain 56601).